Reading from the N-terminus, the 1067-residue chain is Kinesin-like protein KIF11-A (1067 aa).

Positions 18–359 constitute a Kinesin motor domain; that stretch reads NIQVVVRCRP…LDYASRAKNI (342 aa). An ATP-binding site is contributed by 105 to 112; sequence GQTGTGKT. Coiled-coil stretches lie at residues 365 to 480, 692 to 721, and 882 to 915; these read VNQK…QEAF, DSSSALSSIQSEYESLKEEIATAQSTHSEG, and QAQEKALTSLVEQVKDDKEMLGEQRLELNEQVQS. T937 is modified (phosphothreonine; by CDK1). S1046 is subject to Phosphoserine; by NEK6.

This sequence belongs to the TRAFAC class myosin-kinesin ATPase superfamily. Kinesin family. BimC subfamily. In terms of assembly, heterotetramer of two heavy and two light chains. Interacts with aurka. In terms of processing, phosphorylation of Thr-937 during mitosis controls the association of this protein with the spindle apparatus. A subset of this protein primarily localized at the spindle pole is phosphorylated by NEK6 during mitosis. Post-translationally, phosphorylated on a serine residue by aurka. As to expression, highly expressed in unfertilized eggs, especially in the germinal vesicle and in the radial yolk-poor channels. Also present in testis.

It localises to the cytoplasm. The protein resides in the cytoskeleton. Its subcellular location is the spindle pole. Functionally, plus end-directed motor protein required for establishing a bipolar spindle. Associates with both interphase and spindle microtubules. May be involved in nuclear divisions taking place during the development of unfertilized eggs. Required in non-mitotic cells for transport of secretory proteins from the Golgi complex to the cell surface. This is Kinesin-like protein KIF11-A (kif11-a) from Xenopus laevis (African clawed frog).